Reading from the N-terminus, the 486-residue chain is Cardiolipin synthase A (486 aa).

A run of 2 helical transmembrane segments spans residues 3–23 (TFYT…IAGV) and 38–58 (MAWL…YLSF). PLD phosphodiesterase domains follow at residues 219–246 (MDLR…VDPR) and 399–426 (EDGL…DMRS). Residues histidine 224, lysine 226, aspartate 231, histidine 404, lysine 406, and aspartate 411 contribute to the active site.

The protein belongs to the phospholipase D family. Cardiolipin synthase subfamily. ClsA sub-subfamily.

The protein localises to the cell inner membrane. It catalyses the reaction 2 a 1,2-diacyl-sn-glycero-3-phospho-(1'-sn-glycerol) = a cardiolipin + glycerol. In terms of biological role, catalyzes the reversible phosphatidyl group transfer from one phosphatidylglycerol molecule to another to form cardiolipin (CL) (diphosphatidylglycerol) and glycerol. This Serratia proteamaculans (strain 568) protein is Cardiolipin synthase A.